We begin with the raw amino-acid sequence, 299 residues long: Kynurenine formamidase-like hydrolase fscH (299 aa).

Positions 48–52 (HGGAW) match the HGGXW motif. Positions 90–110 (SPRTPSQPVPSGGHVGGEQQA) are disordered. Serine 142 acts as the Nucleophile in catalysis.

This sequence belongs to the kynurenine formamidase family.

Its pathway is secondary metabolite biosynthesis. Kynurenine formamidase-like hydrolase; part of the fragmented gene cluster that mediates the biosynthesis of fusarochromene, a tryptophan-derived metabolite closely related to a group of mycotoxins including fusarochromanone. Within the pathway, fscH converts the product of fscD into 4-hydroxykyrunenine. The first step of the pathway is the epimerization of L-tryptophan to D-tryptophan in the presence of the NRPS-like tryptophan epimerase fscC. D-tryptophan is subsequently hydroxylated by the tryptophan 6-hydroxylase fscE to yield 6-hydroxytryptophan. The pyrrole ring undergoes cleavaged by the tryptophan 2,3-dioxygenase fscD and is finally converted to 4-hydroxykyrunenine by the hydrolase fscH. The NRPS-like oxidoreductase fscA reduces the carboxyl group to primary alcohol and the DMATS-type prenyltransferase fscG performs prenylation, followed by the formation of a chromene ring catalyzed by the oxidoreductase fscI, which leads to desacetylfusarochromene. Epoxidation by fscF and rearrangement reactions of chromene double bonds convert compound desacetylfusarochromene to fusarochromanones. Although specific acetyltransferases were not found near the fsc gene cluster, several predicted enzymes containing the N-acetyltransferase superfamily domain are present in the genome of F.equiseti. These predicted enzymes may have the potential to convert desacetylfusarochromene to fusarochromene. The sequence is that of Kynurenine formamidase-like hydrolase fscH from Fusarium equiseti (Fusarium scirpi).